The chain runs to 880 residues: GAS2-like protein 2 (880 aa).

In terms of domain architecture, Calponin-homology (CH) spans 32-159 (EAMKEDLAEW…CLLELGRRAW (128 aa)). The interval 180–200 (RRELALPPPDPSPPAPPRRQP) is disordered. The span at 185-198 (LPPPDPSPPAPPRR) shows a compositional bias: pro residues. One can recognise a GAR domain in the interval 201–273 (CHFRNLDQMV…HYLDKHDPCR (73 aa)). 4 disordered regions span residues 283–360 (SFLK…MAPF), 372–437 (WRQP…NPTP), 489–533 (ESVR…ELGR), and 676–880 (APTG…ESWV). The span at 301–315 (GPSQTQPTMTISRSQ) shows a compositional bias: polar residues. Residues 438 to 880 (QRLRAIEATT…PLPPEEESWV (443 aa)) are interaction with ADORA2A. The segment covering 506-515 (RLPPARPPTP) has biased composition (pro residues). Over residues 725–734 (QDCSASTVSA) the composition is skewed to polar residues. Basic residues-rich tracts occupy residues 757 to 767 (KGRRTLRKPKR) and 774 to 785 (LKLRPRIRPRRD).

This sequence belongs to the GAS2 family. In terms of assembly, interacts with ADORA2A (via its cytoplasmic C-terminal domain). Interacts with GNAS, GNAL, GNAQ, and GNA13. Interacts with MAPRE1. Expressed in bronchial and nasal epithelial cells (at protein level). Expressed in brain, kidney, lung, testis, fallopian tubes, and skeletal muscle. Expressed at low levels in stomach and colon.

Its subcellular location is the cytoplasm. The protein resides in the cytoskeleton. It localises to the cell membrane. It is found in the stress fiber. The protein localises to the cilium basal body. In terms of biological role, involved in the cross-linking of microtubules and microfilaments. Regulates microtubule dynamics and stability by interacting with microtubule plus-end tracking proteins, such as MAPRE1, to regulate microtubule growth along actin stress fibers. Enhances ADORA2-mediated adenylyl cyclase activation by acting as a scaffold to recruit trimeric G-protein complexes to ADORA2A. Regulates ciliary orientation and performance in cells located in the airway. In Homo sapiens (Human), this protein is GAS2-like protein 2 (GAS2L2).